A 167-amino-acid chain; its full sequence is Fimbrial adapter PapF (167 aa).

Residues 1-18 form the signal peptide; it reads MIRLSLFISLLLTSVAVL.

It localises to the secreted. It is found in the fimbrium. Functionally, adapter that links the PapG adhesin to the distal end of the tip fibrillum. PapF is required for the correct presentation of the adhesin at the distal end of the tip fibrillum. Pili are polar filaments radiating from the surface of the bacterium to a length of 0.5-1.5 micrometers and numbering 100-300 per cell, and enable bacteria to colonize the epithelium of specific host organs. This is Fimbrial adapter PapF (papF) from Escherichia coli.